We begin with the raw amino-acid sequence, 396 residues long: Alanine racemase (396 aa).

Catalysis depends on Lys-46, which acts as the Proton acceptor; specific for D-alanine. An N6-(pyridoxal phosphate)lysine modification is found at Lys-46. Arg-145 is a substrate binding site. Tyr-280 acts as the Proton acceptor; specific for L-alanine in catalysis. Met-328 is a binding site for substrate.

Belongs to the alanine racemase family. Pyridoxal 5'-phosphate serves as cofactor.

The enzyme catalyses L-alanine = D-alanine. It participates in amino-acid biosynthesis; D-alanine biosynthesis; D-alanine from L-alanine: step 1/1. In terms of biological role, catalyzes the interconversion of L-alanine and D-alanine. May also act on other amino acids. The sequence is that of Alanine racemase (alr) from Brucella ovis (strain ATCC 25840 / 63/290 / NCTC 10512).